Here is a 597-residue protein sequence, read N- to C-terminus: HECT-type ubiquitin ligase-interacting protein creD (597 aa).

Disordered stretches follow at residues E375 to S398, A439 to P492, and S576 to A597. A compositionally biased stretch (polar residues) spans G452–A466. The segment covering L472–D483 has biased composition (basic and acidic residues).

The protein belongs to the arrestin family. Interacts with hulA.

Its function is as follows. Component of the regulatory network controlling carbon source utilization through ubiquitination and deubiquitination involving creA, creB, creC, creD and acrB. May be involved in signaling by recognizing appropriately phosphorylated substrates via its arrestin domains and then recruit a HECT-type ubiquitin ligase such as hulA, leading to ubiquitination of the substrate, providing a link between ubiquitination and phosphorylation in protein regulation and stability. The sequence is that of HECT-type ubiquitin ligase-interacting protein creD (creD) from Emericella nidulans (strain FGSC A4 / ATCC 38163 / CBS 112.46 / NRRL 194 / M139) (Aspergillus nidulans).